Here is a 160-residue protein sequence, read N- to C-terminus: 2-C-methyl-D-erythritol 2,4-cyclodiphosphate synthase (160 aa).

A divalent metal cation contacts are provided by aspartate 10 and histidine 12. 4-CDP-2-C-methyl-D-erythritol 2-phosphate contacts are provided by residues 10–12 (DVH) and 36–37 (HS). Residue histidine 44 participates in a divalent metal cation binding. 4-CDP-2-C-methyl-D-erythritol 2-phosphate-binding positions include 58–60 (DIG), 63–67 (FPDTD), 102–108 (AQAPKML), 134–137 (TTTE), phenylalanine 141, and arginine 144.

It belongs to the IspF family. Homotrimer. A divalent metal cation serves as cofactor.

It catalyses the reaction 4-CDP-2-C-methyl-D-erythritol 2-phosphate = 2-C-methyl-D-erythritol 2,4-cyclic diphosphate + CMP. Its pathway is isoprenoid biosynthesis; isopentenyl diphosphate biosynthesis via DXP pathway; isopentenyl diphosphate from 1-deoxy-D-xylulose 5-phosphate: step 4/6. Functionally, involved in the biosynthesis of isopentenyl diphosphate (IPP) and dimethylallyl diphosphate (DMAPP), two major building blocks of isoprenoid compounds. Catalyzes the conversion of 4-diphosphocytidyl-2-C-methyl-D-erythritol 2-phosphate (CDP-ME2P) to 2-C-methyl-D-erythritol 2,4-cyclodiphosphate (ME-CPP) with a corresponding release of cytidine 5-monophosphate (CMP). This Shewanella amazonensis (strain ATCC BAA-1098 / SB2B) protein is 2-C-methyl-D-erythritol 2,4-cyclodiphosphate synthase.